We begin with the raw amino-acid sequence, 244 residues long: MSFSPVSPSQFPSVTKLQVDSVTFDPSVKSPASSNPLFLGGAGVRGLDIQGKFVIFTVIGVYLESNAVPSLSVKWKGKTTEELSESVPFFREIVTGAFEKFIKVTMKLPLTGQQYSEKVTENCVAIWKSLGIYTDCEAKAVEKFLEIFKEETFPPGSSILFALSPTGSLTVAFSRDDSIPETGIAVIENKLLAEAVLESIIGKNGVSPGTRLSIAERLAKLMTKNKVEEDASNHSIDEKLAKEN.

Substrate-binding residues include Thr57, Asn122, and Ser199.

This sequence belongs to the chalcone isomerase family.

The enzyme catalyses a chalcone = a flavanone.. It functions in the pathway secondary metabolite biosynthesis; flavonoid biosynthesis. In terms of biological role, catalyzes the intramolecular cyclization of bicyclic chalcones into tricyclic (S)-flavanones. Responsible for the isomerization of 4,2',4',6'-tetrahydroxychalcone (also termed chalcone) into naringenin. The sequence is that of Chalcone--flavanone isomerase (CHI) from Arabidopsis lyrata subsp. petraea (Northern rock-cress).